Consider the following 240-residue polypeptide: Poxin (240 aa).

His46 (proton donor) is an active-site residue. The Shared with catalytic histidine of dimeric partner role is filled by Tyr181. The Proton acceptor; shared with catalytic histidine of dimeric partner role is filled by Lys185.

The protein belongs to the poxin family. As to quaternary structure, homodimer.

The enzyme catalyses 2',3'-cGAMP + H2O = Gp(2'-5')Ap(3') + H(+). Its function is as follows. Nuclease that cleaves host 2',3'-cGAMP. The chain is Poxin (p26) from Bombyx mori (Silk moth).